The primary structure comprises 524 residues: Lycopene epsilon cyclase, chloroplastic (524 aa).

The transit peptide at 1–45 (MECVGARNFAAMAVSTFPSWSCRRKFPVVKRYSYRNIRFGLCSVR) directs the protein to the chloroplast. 111 to 139 (LVVIGCGPAGLALAAESAKLGLKVGLIGP) lines the NAD(+) pocket. Transmembrane regions (helical) follow at residues 441–461 (FFLFGLALIVQFDTEGIRSFF) and 475–495 (FLGSTLTSGDLVLFALYMFVI).

Belongs to the lycopene cyclase family.

It is found in the plastid. The protein localises to the chloroplast membrane. The catalysed reaction is a carotenoid psi-end group = a carotenoid epsilon-end group. It functions in the pathway carotenoid biosynthesis; alpha-zeacarotene biosynthesis. Its pathway is carotenoid biosynthesis; delta-carotene biosynthesis. Its function is as follows. Involved in carotenoid biosynthesis. Catalyzes the single epsilon-cyclization reaction which converts lycopene to delta-carotene and neurosporene to alpha-zeacarotene. Required for lutein biosynthesis. This Arabidopsis thaliana (Mouse-ear cress) protein is Lycopene epsilon cyclase, chloroplastic.